The sequence spans 572 residues: 2-hydroxyacyl-CoA lyase (572 aa).

A2 is modified (N-acetylalanine). A thiamine diphosphate-binding site is contributed by E58. The segment at 407–488 is thiamine pyrophosphate binding; the sequence is TMDVGRSVLV…IIVFNNGGVY (82 aa). Residues D457 and N484 each coordinate Mg(2+).

Belongs to the TPP enzyme family. As to quaternary structure, homotetramer. The cofactor is Mg(2+). It depends on thiamine diphosphate as a cofactor.

It catalyses the reaction an (R)-2-hydroxy-long-chain-fatty acyl-CoA = a long-chain fatty aldehyde + formyl-CoA. The catalysed reaction is a 2-hydroxy-3-methyl fatty acyl-CoA = a 2-methyl-branched fatty aldehyde + formyl-CoA. Its function is as follows. Catalyzes a carbon-carbon cleavage reaction; cleaves a 2-hydroxy-3-methylacyl-CoA into formyl-CoA and a 2-methyl-branched fatty aldehyde. The chain is 2-hydroxyacyl-CoA lyase (HACL) from Arabidopsis thaliana (Mouse-ear cress).